A 234-amino-acid polypeptide reads, in one-letter code: Phosphatidylinositol phosphate synthase (234 aa).

2 helical membrane passes run 28 to 48 (LTPDAVTIIGTTASVAGALVL) and 54 to 70 (LFPGACVVWFFVLFDML). 31-34 (DAVT) serves as a coordination point for a CDP-1,2-diacyl-sn-glycerol. Mg(2+) is bound by residues Asp-68 and Asp-71. Residues Gly-72, Arg-76, and Thr-82 each contribute to the a CDP-1,2-diacyl-sn-glycerol site. Mg(2+)-binding residues include Asp-89 and Asp-93. The next 4 helical transmembrane spans lie at 91–110 (ACDRISDGAVFGGLLWWVAF), 116–134 (LLVVATLICLVTSQVISYI), 155–173 (RLIIVLAGAGVSDFPFIAW), and 179–197 (VAMWLLAVTSVITCGQRLY). Residue Asp-93 is the Proton acceptor of the active site. Residues 211–234 (PSAPVRDDDAQGHPRSGDPGKTQR) form a disordered region. The span at 215-228 (VRDDDAQGHPRSGD) shows a compositional bias: basic and acidic residues.

The protein belongs to the CDP-alcohol phosphatidyltransferase class-I family. In terms of assembly, homodimer. Requires Mg(2+) as cofactor.

The protein localises to the cell membrane. It catalyses the reaction a CDP-1,2-diacyl-sn-glycerol + 1D-myo-inositol 3-phosphate = a 1,2-diacyl-sn-glycero-3-phospho-(1D-myo-inositol-3-phosphate) + CMP + H(+). The catalysed reaction is 1,2-di-(9Z-octadecenoyl)-sn-glycero-3-cytidine-5'-diphosphate + 1D-myo-inositol 3-phosphate = 1,2-di-(9Z-octadecenoyl)-sn-glycero-3-phospho-(1D-myo-inositol-3-phosphate) + CMP + H(+). Its pathway is phospholipid metabolism; phosphatidylinositol phosphate biosynthesis. Its function is as follows. Catalyzes the conjugation of the 1'-hydroxyl group of D-myo-inositol-3-phosphate (also named L-myo-inositol-1-phosphate) with a lipid tail of cytidine diphosphate diacylglycerol (CDP-DAG), forming phosphatidylinositol phosphate (PIP) and CMP. PIP is a precursor of phosphatidylinositol (PI) which is an essential lipid for mycobacteria required for formation of their cell wall. This Mycobacterium marinum (strain ATCC BAA-535 / M) protein is Phosphatidylinositol phosphate synthase.